The following is a 452-amino-acid chain: Tubulin alpha-1 chain (452 aa).

Glutamine 11 contributes to the GTP binding site. Residue lysine 40 is modified to N6-acetyllysine. Residues glutamate 71, serine 140, glycine 144, threonine 145, threonine 179, asparagine 206, and asparagine 228 each coordinate GTP. Glutamate 71 lines the Mg(2+) pocket. Glutamate 254 is a catalytic residue. The segment at glutamate 433 to tyrosine 452 is disordered.

This sequence belongs to the tubulin family. Dimer of alpha and beta chains. A typical microtubule is a hollow water-filled tube with an outer diameter of 25 nm and an inner diameter of 15 nM. Alpha-beta heterodimers associate head-to-tail to form protofilaments running lengthwise along the microtubule wall with the beta-tubulin subunit facing the microtubule plus end conferring a structural polarity. Microtubules usually have 13 protofilaments but different protofilament numbers can be found in some organisms and specialized cells. Requires Mg(2+) as cofactor. Post-translationally, undergoes a tyrosination/detyrosination cycle, the cyclic removal and re-addition of a C-terminal tyrosine residue by the enzymes tubulin tyrosine carboxypeptidase (TTCP) and tubulin tyrosine ligase (TTL), respectively. Acetylation of alpha chains at Lys-40 stabilizes microtubules and affects affinity and processivity of microtubule motors. This modification has a role in multiple cellular functions, ranging from cell motility, cell cycle progression or cell differentiation to intracellular trafficking and signaling.

The protein localises to the cytoplasm. The protein resides in the cytoskeleton. It carries out the reaction GTP + H2O = GDP + phosphate + H(+). Functionally, tubulin is the major constituent of microtubules, a cylinder consisting of laterally associated linear protofilaments composed of alpha- and beta-tubulin heterodimers. Microtubules grow by the addition of GTP-tubulin dimers to the microtubule end, where a stabilizing cap forms. Below the cap, tubulin dimers are in GDP-bound state, owing to GTPase activity of alpha-tubulin. This chain is Tubulin alpha-1 chain, found in Paracentrotus lividus (Common sea urchin).